The primary structure comprises 440 residues: Ribosomal protein uS12 methylthiotransferase RimO (440 aa).

The 111-residue stretch at 6–116 (PKVGFVSLGC…VVTAVHEVVP (111 aa)) folds into the MTTase N-terminal domain. 6 residues coordinate [4Fe-4S] cluster: Cys15, Cys51, Cys80, Cys149, Cys153, and Cys156. In terms of domain architecture, Radical SAM core spans 135–373 (LTPRHYAYLK…MAHQQAISAA (239 aa)). Residues 376-440 (QLKVGKEIEV…DEYDLWAELV (65 aa)) enclose the TRAM domain.

Belongs to the methylthiotransferase family. RimO subfamily. The cofactor is [4Fe-4S] cluster.

Its subcellular location is the cytoplasm. The catalysed reaction is L-aspartate(89)-[ribosomal protein uS12]-hydrogen + (sulfur carrier)-SH + AH2 + 2 S-adenosyl-L-methionine = 3-methylsulfanyl-L-aspartate(89)-[ribosomal protein uS12]-hydrogen + (sulfur carrier)-H + 5'-deoxyadenosine + L-methionine + A + S-adenosyl-L-homocysteine + 2 H(+). Its function is as follows. Catalyzes the methylthiolation of an aspartic acid residue of ribosomal protein uS12. The sequence is that of Ribosomal protein uS12 methylthiotransferase RimO from Pseudomonas aeruginosa (strain UCBPP-PA14).